We begin with the raw amino-acid sequence, 78 residues long: Large ribosomal subunit protein bL28 (78 aa).

The interval 1-29 is disordered; it reads MSAHCQVTGRKPSFGKSVSHSHRRTSRRW.

It belongs to the bacterial ribosomal protein bL28 family.

The polypeptide is Large ribosomal subunit protein bL28 (Corynebacterium glutamicum (strain ATCC 13032 / DSM 20300 / JCM 1318 / BCRC 11384 / CCUG 27702 / LMG 3730 / NBRC 12168 / NCIMB 10025 / NRRL B-2784 / 534)).